A 295-amino-acid chain; its full sequence is uncharacterized protein (295 aa).

The protein resides in the plastid. It localises to the chloroplast. This is an uncharacterized protein from Euglena gracilis.